A 350-amino-acid polypeptide reads, in one-letter code: Glycerol-1-phosphate dehydrogenase [NAD(P)+] (350 aa).

NAD(+) is bound by residues Gly-97–Asp-101 and Thr-119–Ser-122. A substrate-binding site is contributed by Asp-124. Residue Ser-128 coordinates NAD(+). Residue Asp-171 participates in substrate binding. Zn(2+)-binding residues include Asp-171 and His-251. His-255 lines the substrate pocket. His-267 is a binding site for Zn(2+).

This sequence belongs to the glycerol-1-phosphate dehydrogenase family. Requires Zn(2+) as cofactor.

It localises to the cytoplasm. It catalyses the reaction sn-glycerol 1-phosphate + NAD(+) = dihydroxyacetone phosphate + NADH + H(+). The catalysed reaction is sn-glycerol 1-phosphate + NADP(+) = dihydroxyacetone phosphate + NADPH + H(+). Its pathway is membrane lipid metabolism; glycerophospholipid metabolism. Functionally, catalyzes the NAD(P)H-dependent reduction of dihydroxyacetonephosphate (DHAP or glycerone phosphate) to glycerol 1-phosphate (G1P). The G1P thus generated is used as the glycerophosphate backbone of phospholipids in the cellular membranes of Archaea. The polypeptide is Glycerol-1-phosphate dehydrogenase [NAD(P)+] (Thermococcus sibiricus (strain DSM 12597 / MM 739)).